A 249-amino-acid chain; its full sequence is uncharacterized protein (249 aa).

Residues 1–25 form the signal peptide; that stretch reads MRYLNTKNIIAAGVLLSCMSSIAWG.

The protein belongs to the periplasmic pilus chaperone family.

Its subcellular location is the periplasm. Functionally, could be required for the biogenesis of a putative fimbria. This is an uncharacterized protein from Escherichia coli (strain K12).